Here is a 338-residue protein sequence, read N- to C-terminus: Anthranilate phosphoribosyltransferase (338 aa).

5-phospho-alpha-D-ribose 1-diphosphate-binding positions include Gly81, 84 to 85, Thr89, 91 to 94, 109 to 117, and Ser121; these read GD, NIST, and KHGNRGVSS. An anthranilate-binding site is contributed by Gly81. Ser93 lines the Mg(2+) pocket. Residue Asn112 coordinates anthranilate. Arg167 lines the anthranilate pocket. The Mg(2+) site is built by Asp225 and Glu226.

The protein belongs to the anthranilate phosphoribosyltransferase family. As to quaternary structure, homodimer. The cofactor is Mg(2+).

It carries out the reaction N-(5-phospho-beta-D-ribosyl)anthranilate + diphosphate = 5-phospho-alpha-D-ribose 1-diphosphate + anthranilate. It participates in amino-acid biosynthesis; L-tryptophan biosynthesis; L-tryptophan from chorismate: step 2/5. In terms of biological role, catalyzes the transfer of the phosphoribosyl group of 5-phosphorylribose-1-pyrophosphate (PRPP) to anthranilate to yield N-(5'-phosphoribosyl)-anthranilate (PRA). The chain is Anthranilate phosphoribosyltransferase from Methanoculleus marisnigri (strain ATCC 35101 / DSM 1498 / JR1).